The primary structure comprises 300 residues: Tyrosine recombinase XerC (300 aa).

The Core-binding (CB) domain occupies 2–87 (TSLSPLLEKF…SIKSFYKYLV (86 aa)). The region spanning 108–294 (TLPKVLPVEE…TWEQLQQVYD (187 aa)) is the Tyr recombinase domain. Residues arginine 148, lysine 172, histidine 246, arginine 249, and histidine 272 contribute to the active site. The active-site O-(3'-phospho-DNA)-tyrosine intermediate is the tyrosine 281.

The protein belongs to the 'phage' integrase family. XerC subfamily. Forms a cyclic heterotetrameric complex composed of two molecules of XerC and two molecules of XerD.

It is found in the cytoplasm. Its function is as follows. Site-specific tyrosine recombinase, which acts by catalyzing the cutting and rejoining of the recombining DNA molecules. The XerC-XerD complex is essential to convert dimers of the bacterial chromosome into monomers to permit their segregation at cell division. It also contributes to the segregational stability of plasmids. The protein is Tyrosine recombinase XerC of Myxococcus xanthus.